Reading from the N-terminus, the 212-residue chain is ER lumen protein-retaining receptor (212 aa).

At 1–2 (MN) the chain is on the lumenal side. Residues 3–21 (IFRFAGDLSHVFAIIILLL) form a helical membrane-spanning segment. Residues 22–35 (KIWKTRSCAGISGK) are Cytoplasmic-facing. Residues 36–53 (SQILFAVVYLTRYLDLFT) form a helical membrane-spanning segment. Over 54-61 (TYVSLYNS) the chain is Lumenal. The helical transmembrane segment at 62 to 80 (VMKVLFLATSGATVYLMYV) threads the bilayer. At 81 to 96 (KFKATYDHNHDSFRIE) the chain is on the cytoplasmic side. The chain crosses the membrane as a helical span at residues 97–110 (FLLVPCALLSLVIN). At 111–117 (HEFTVME) the chain is on the lumenal side. A helical membrane pass occupies residues 118–137 (VLWTFSIYLESVAILPQLFL). At 138–149 (VSRTGEAESITS) the chain is on the cytoplasmic side. A helical transmembrane segment spans residues 150–168 (HYLFALGSYRALYLLNWVY). Over 169-178 (RYMVESHYDL) the chain is Lumenal. Residues 179 to 199 (IAIFAGVVQTVLYCDFFYLYI) form a helical membrane-spanning segment. The Cytoplasmic segment spans residues 200–212 (TKVLKGKKLQLPA).

Belongs to the ERD2 family.

It is found in the endoplasmic reticulum membrane. Functionally, required for the retention of luminal endoplasmic reticulum proteins. Determines the specificity of the luminal ER protein retention system. Also required for normal vesicular traffic through the Golgi. The polypeptide is ER lumen protein-retaining receptor (KdelR) (Drosophila melanogaster (Fruit fly)).